The primary structure comprises 855 residues: Protein translocase subunit SecA (855 aa).

Residues Q85, 103–107 (GEGKT), and D492 contribute to the ATP site. The tract at residues 794-845 (AAIHEESSSAAAPGPGQNQPGGPGGPSAGPVAPVRNLDKHGRNELCPCGSGK) is disordered. Positions 801–811 (SSAAAPGPGQN) are enriched in low complexity. Residues C839, C841, C850, and C851 each coordinate Zn(2+).

Belongs to the SecA family. Monomer and homodimer. Part of the essential Sec protein translocation apparatus which comprises SecA, SecYEG and auxiliary proteins SecDF. Other proteins may also be involved. Zn(2+) is required as a cofactor.

It is found in the cell membrane. It localises to the cytoplasm. The enzyme catalyses ATP + H2O + cellular proteinSide 1 = ADP + phosphate + cellular proteinSide 2.. Part of the Sec protein translocase complex. Interacts with the SecYEG preprotein conducting channel. Has a central role in coupling the hydrolysis of ATP to the transfer of proteins into and across the cell membrane, serving as an ATP-driven molecular motor driving the stepwise translocation of polypeptide chains across the membrane. The chain is Protein translocase subunit SecA from Clostridium beijerinckii (strain ATCC 51743 / NCIMB 8052) (Clostridium acetobutylicum).